We begin with the raw amino-acid sequence, 276 residues long: Putative oxidoreductase SadH (276 aa).

A substrate-binding site is contributed by Ser-142. The active-site Proton acceptor is the Tyr-155.

It belongs to the short-chain dehydrogenases/reductases (SDR) family.

Its function is as follows. Required for maintaining the appropriate mycolic acid composition and permeability of the envelope on its exposure to acidic pH. In Mycobacterium tuberculosis (strain CDC 1551 / Oshkosh), this protein is Putative oxidoreductase SadH (sadH).